We begin with the raw amino-acid sequence, 2434 residues long: Protein Ycf2 (2434 aa).

1693 to 1700 (GPTETGRS) is an ATP binding site.

Belongs to the Ycf2 family.

The protein localises to the plastid. It is found in the chloroplast stroma. Probable ATPase of unknown function. Its presence in a non-photosynthetic plant (Epifagus virginiana) and experiments in tobacco indicate that it has an essential function which is probably not related to photosynthesis. The polypeptide is Protein Ycf2 (Cycas taitungensis (Prince sago)).